Here is a 54-residue protein sequence, read N- to C-terminus: Large ribosomal subunit protein bL33 (54 aa).

Belongs to the bacterial ribosomal protein bL33 family.

This Stenotrophomonas maltophilia (strain K279a) protein is Large ribosomal subunit protein bL33.